A 369-amino-acid chain; its full sequence is Iron-sulfur cluster carrier protein (369 aa).

115-122 (GKGGVGKS) serves as a coordination point for ATP.

This sequence belongs to the Mrp/NBP35 ATP-binding proteins family. In terms of assembly, homodimer. Holo-ApbC forms a mixture of homodimers and homotetramers.

Binds and transfers iron-sulfur (Fe-S) clusters to target apoproteins. Can hydrolyze ATP. Both activities are required for function in vivo, but the ability to hydrolyze ATP is not necessary for Fe-S cluster transfer. The polypeptide is Iron-sulfur cluster carrier protein (Salmonella typhimurium (strain LT2 / SGSC1412 / ATCC 700720)).